The primary structure comprises 512 residues: Lysine--tRNA ligase (512 aa).

2 residues coordinate Mg(2+): glutamate 408 and glutamate 415.

It belongs to the class-II aminoacyl-tRNA synthetase family. In terms of assembly, homodimer. Mg(2+) serves as cofactor.

The protein resides in the cytoplasm. It catalyses the reaction tRNA(Lys) + L-lysine + ATP = L-lysyl-tRNA(Lys) + AMP + diphosphate. This is Lysine--tRNA ligase from Prochlorococcus marinus subsp. pastoris (strain CCMP1986 / NIES-2087 / MED4).